Reading from the N-terminus, the 488-residue chain is Spermatogenesis-associated protein 6 (488 aa).

The first 20 residues, 1-20 (MPKVKALQCALALEISSVTC), serve as a signal peptide directing secretion. The segment at 176-199 (HGRLQNRTSRSQKKKSKSPERSKY) is disordered. A glycan (N-linked (GlcNAc...) asparagine) is linked at Asn-181. Ser-217 and Ser-219 each carry phosphoserine. Lys-248 is covalently cross-linked (Glycyl lysine isopeptide (Lys-Gly) (interchain with G-Cter in SUMO2)). Residues 256-275 (FVIRHVDPPSPRADTLLGSS) form a disordered region. Ser-265, Ser-274, Ser-325, Ser-343, Ser-346, Ser-354, Ser-424, Ser-465, and Ser-487 each carry phosphoserine.

Belongs to the SPATA6 family. In terms of assembly, interacts with MYL6.

Its subcellular location is the secreted. It is found in the cell projection. It localises to the cilium. The protein resides in the flagellum. Required for formation of the sperm connecting piece during spermiogenesis. Sperm connecting piece is essential for linking the developing flagellum to the head during late spermiogenesis. May be involved in myosin-based microfilament transport through interaction with myosin subunits. The sequence is that of Spermatogenesis-associated protein 6 (SPATA6) from Homo sapiens (Human).